The sequence spans 485 residues: MSYRITGSTGEWEIVVGLEVHAQVVSEAKLFSGASAEYGGEPNTHVSLVDAGFPGMLPVLNRECVAQAVRTGLGLEAEINLFSRFDRKNYFYADLPTGYQISQFAHPIIGKGKVLVDLADGSTREIGVTRLHLEQDAGKSIHDQDPTRSFIDLNRAGVALMEIVSEPDIRSPEEAGAYLRKLRQILRYIGTCDGNMEEGSMRADVNVSVRKPGETEYRTRCEIKNVNSIRFVMMAIEVEAQRQIEVWEAGGTVDQETRLFDHVRGETRSLRSKEDAHDYRYFPDPDLLPLVIEQSWVDELKAALPELPEAKRARLEQEYGVSRYESSVLCVEQAIADFYETVARGADARLAANWMLGDFFAALNRTGRSIEDSPVSAEGLRELLGLISDSTINGKIAKEVLEDMVETGDSASAIVERKGLRQVTDTGAIESAIREILAANSDKVEEYKGGKDKLFGFFVGQTMKAMKGKGNPALVNETLKKLLSE.

This sequence belongs to the GatB/GatE family. GatB subfamily. In terms of assembly, heterotrimer of A, B and C subunits.

It catalyses the reaction L-glutamyl-tRNA(Gln) + L-glutamine + ATP + H2O = L-glutaminyl-tRNA(Gln) + L-glutamate + ADP + phosphate + H(+). It carries out the reaction L-aspartyl-tRNA(Asn) + L-glutamine + ATP + H2O = L-asparaginyl-tRNA(Asn) + L-glutamate + ADP + phosphate + 2 H(+). In terms of biological role, allows the formation of correctly charged Asn-tRNA(Asn) or Gln-tRNA(Gln) through the transamidation of misacylated Asp-tRNA(Asn) or Glu-tRNA(Gln) in organisms which lack either or both of asparaginyl-tRNA or glutaminyl-tRNA synthetases. The reaction takes place in the presence of glutamine and ATP through an activated phospho-Asp-tRNA(Asn) or phospho-Glu-tRNA(Gln). This is Aspartyl/glutamyl-tRNA(Asn/Gln) amidotransferase subunit B from Gluconobacter oxydans (strain 621H) (Gluconobacter suboxydans).